Consider the following 305-residue polypeptide: Sulfate adenylyltransferase subunit 2 (305 aa).

It belongs to the PAPS reductase family. CysD subfamily. As to quaternary structure, heterodimer composed of CysD, the smaller subunit, and CysN.

The enzyme catalyses sulfate + ATP + H(+) = adenosine 5'-phosphosulfate + diphosphate. It functions in the pathway sulfur metabolism; hydrogen sulfide biosynthesis; sulfite from sulfate: step 1/3. In terms of biological role, with CysN forms the ATP sulfurylase (ATPS) that catalyzes the adenylation of sulfate producing adenosine 5'-phosphosulfate (APS) and diphosphate, the first enzymatic step in sulfur assimilation pathway. APS synthesis involves the formation of a high-energy phosphoric-sulfuric acid anhydride bond driven by GTP hydrolysis by CysN coupled to ATP hydrolysis by CysD. The sequence is that of Sulfate adenylyltransferase subunit 2 from Myxococcus xanthus (strain DK1622).